A 396-amino-acid chain; its full sequence is Argininosuccinate synthase (396 aa).

Residue 9 to 17 (AYSGGLDTS) coordinates ATP. Tyr-85 is a binding site for L-citrulline. ATP is bound at residue Gly-115. L-aspartate is bound by residues Thr-117, Asn-121, and Asp-122. L-citrulline is bound at residue Asn-121. Residues Arg-125, Ser-173, Glu-258, and Tyr-270 each contribute to the L-citrulline site.

Belongs to the argininosuccinate synthase family. Type 1 subfamily. Homotetramer.

It is found in the cytoplasm. The catalysed reaction is L-citrulline + L-aspartate + ATP = 2-(N(omega)-L-arginino)succinate + AMP + diphosphate + H(+). The protein operates within amino-acid biosynthesis; L-arginine biosynthesis; L-arginine from L-ornithine and carbamoyl phosphate: step 2/3. The sequence is that of Argininosuccinate synthase from Streptococcus agalactiae serotype Ia (strain ATCC 27591 / A909 / CDC SS700).